The sequence spans 559 residues: MAAQGFLLLASYLLVLLVLARPLGMCLARMVNDIPLPGLAGVERVLWRVAGIRAEEMGWLQYLLAILLFNALGGLALFALLMLQGVLPFNPQHLPGLSWDLALNTAISFISNTNWQAYAGESTMSYLSQMVGLTVQNFLSAATGIAVVFALTRAFARQKMSTLGNAWVDLTRITLWLLLPLSLLVALFFIQQGVPQNLQAYQPFITLEGVHQLLPMGPVASQEAIKLLGTNGGGFFNANSAHPFENPTALTNLVQMLAIFLIPTALCFAFGEVVSDRRQGRAILWAMTLIFILCVAVVMWAETRGNPHLLTLGADSSLNMEGKESRFGILASSLFAVITTAASCGAVNAMHDSFTALGGMVPMWLMQIGEVVFGGVGSGLYGMLLFVMLAVFIAGLMVGRTPEYLGKKIDVREMKMIALAILVTPTLVLLGTALAMMTDAGRAGMFNPGPHGFSEVLYAVTSAANNNGSAFAGLGAATPFWNLLLAFCMLVGRFAVIIPVMAIAGSLVAKKIQPASPGTLATHDALFIGLLIGTVLLVGALTFIPALALGPLAEHFSLL.

The next 12 membrane-spanning stretches (helical) occupy residues 5 to 25, 63 to 83, 131 to 151, 173 to 193, 254 to 274, 282 to 302, 327 to 347, 356 to 376, 379 to 399, 416 to 436, 483 to 503, and 525 to 545; these read GFLL…PLGM, LLAI…LLML, VGLT…VFAL, ITLW…IQQG, VQML…GEVV, AILW…MWAE, FGIL…CGAV, ALGG…FGGV, GLYG…LMVG, MIAL…ALAM, LLLA…VMAI, and ALFI…TFIP.

The protein belongs to the KdpA family. The system is composed of three essential subunits: KdpA, KdpB and KdpC.

It localises to the cell inner membrane. In terms of biological role, part of the high-affinity ATP-driven potassium transport (or Kdp) system, which catalyzes the hydrolysis of ATP coupled with the electrogenic transport of potassium into the cytoplasm. This subunit binds the periplasmic potassium ions and delivers the ions to the membrane domain of KdpB through an intramembrane tunnel. This Klebsiella pneumoniae subsp. pneumoniae (strain ATCC 700721 / MGH 78578) protein is Potassium-transporting ATPase potassium-binding subunit.